The following is a 515-amino-acid chain: Alpha,alpha-trehalose-phosphate synthase [UDP-forming] 1 (515 aa).

D-glucose 6-phosphate-binding residues include tyrosine 97 and aspartate 151. The UDP site is built by arginine 287 and lysine 292. UDP-alpha-D-glucose is bound by residues arginine 287 and lysine 292. D-glucose 6-phosphate is bound at residue arginine 325. Residues valine 364 and 390–394 (LVAYE) each bind UDP. A UDP-alpha-D-glucose-binding site is contributed by 386–394 (DGMNLVAYE). The disordered stretch occupies residues 483-515 (GKFQSRKAKLPESADAEKPMNGSGESEESQTTQ). Over residues 491 to 500 (KLPESADAEK) the composition is skewed to basic and acidic residues.

Belongs to the glycosyltransferase 20 family.

The enzyme catalyses D-glucose 6-phosphate + UDP-alpha-D-glucose = alpha,alpha-trehalose 6-phosphate + UDP + H(+). It participates in carbohydrate biosynthesis. Synthase catalytic subunit of the trehalose synthase complex that catalyzes the production of trehalose from glucose-6-phosphate and UDP-alpha-D-glucose in a two step process. The disaccharide trehalose serves as a storage carbohydrate that is mobilized during conidial germination. Regulates the level of trehalose as a protectant for cell integrity during thermal and oxidative stress. This Aspergillus fumigatus (strain ATCC MYA-4609 / CBS 101355 / FGSC A1100 / Af293) (Neosartorya fumigata) protein is Alpha,alpha-trehalose-phosphate synthase [UDP-forming] 1.